We begin with the raw amino-acid sequence, 284 residues long: Homeobox protein SIX1 (284 aa).

Positions 124–183 (GEETSYCFKEKSRGVLREWYAHNPYPSPREKRELAEATGLTTTQVSNWFKNRRQRDRAAE) form a DNA-binding region, homeobox. Residues 168-271 (VSNWFKNRRQ…AHQHQLQDSL (104 aa)) form a disordered region. Residues 179–190 (DRAAEAKERENT) are compositionally biased toward basic and acidic residues. Residues 242–271 (RSSNYSLPGLTASQPSHGLQAHQHQLQDSL) are compositionally biased toward polar residues.

This sequence belongs to the SIX/Sine oculis homeobox family. In terms of assembly, interacts with DACH1. Interacts with EYA1. Interacts with EYA2. Interacts with CDH1. Interacts with TBX18. Interacts with CEBPA. Interacts with CEBPB. Interacts with EBF2. In terms of processing, phosphorylated during interphase; becomes hyperphosphorylated during mitosis. Hyperphosphorylation impairs binding to promoter elements. Post-translationally, ubiquitinated by the anaphase promoting complex (APC), leading to its proteasomal degradation.

It is found in the nucleus. It localises to the cytoplasm. Transcription factor that is involved in the regulation of cell proliferation, apoptosis and embryonic development. Plays an important role in the development of several organs, including kidney, muscle and inner ear. Depending on context, functions as a transcriptional repressor or activator. Lacks an activation domain, and requires interaction with EYA family members for transcription activation. Mediates nuclear translocation of EYA1 and EYA2. Binds the 5'-TCA[AG][AG]TTNC-3' motif present in the MEF3 element in the MYOG promoter and CIDEA enhancer. Regulates the expression of numerous genes, including MYC, CCNA1, CCND1 and EZR. Acts as an activator of the IGFBP5 promoter, probably coactivated by EYA2. Repression of precursor cell proliferation in myoblasts is switched to activation through recruitment of EYA3 to the SIX1-DACH1 complex. During myogenesis, seems to act together with EYA2 and DACH2. Regulates the expression of CCNA1. Promotes brown adipocyte differentiation. This is Homeobox protein SIX1 (SIX1) from Lagothrix lagotricha (Brown woolly monkey).